Reading from the N-terminus, the 246-residue chain is Probable transcriptional regulatory protein AHA_1522 (246 aa).

The protein belongs to the TACO1 family.

It is found in the cytoplasm. The sequence is that of Probable transcriptional regulatory protein AHA_1522 from Aeromonas hydrophila subsp. hydrophila (strain ATCC 7966 / DSM 30187 / BCRC 13018 / CCUG 14551 / JCM 1027 / KCTC 2358 / NCIMB 9240 / NCTC 8049).